The chain runs to 129 residues: Ribulose bisphosphate carboxylase small subunit (129 aa).

The segment at 109–129 (LRMTRTESNGRSQHYMWETQR) is disordered.

It belongs to the RuBisCO small chain family. Heterohexadecamer of 8 large and 8 small subunits.

In terms of biological role, ruBisCO catalyzes two reactions: the carboxylation of D-ribulose 1,5-bisphosphate, the primary event in carbon dioxide fixation, as well as the oxidative fragmentation of the pentose substrate. Both reactions occur simultaneously and in competition at the same active site. Although the small subunit is not catalytic it is essential for maximal activity. The protein is Ribulose bisphosphate carboxylase small subunit of Rhizobium meliloti (strain 1021) (Ensifer meliloti).